The primary structure comprises 180 residues: Large ribosomal subunit protein uL5 (180 aa).

It belongs to the universal ribosomal protein uL5 family. In terms of assembly, part of the 50S ribosomal subunit; part of the 5S rRNA/L5/L18/L25 subcomplex. Contacts the 5S rRNA and the P site tRNA. Forms a bridge to the 30S subunit in the 70S ribosome.

This is one of the proteins that bind and probably mediate the attachment of the 5S RNA into the large ribosomal subunit, where it forms part of the central protuberance. In the 70S ribosome it contacts protein S13 of the 30S subunit (bridge B1b), connecting the 2 subunits; this bridge is implicated in subunit movement. Contacts the P site tRNA; the 5S rRNA and some of its associated proteins might help stabilize positioning of ribosome-bound tRNAs. This is Large ribosomal subunit protein uL5 from Chloroflexus aurantiacus (strain ATCC 29364 / DSM 637 / Y-400-fl).